The sequence spans 520 residues: Arginine biosynthesis bifunctional protein ArgJ, chloroplastic (520 aa).

The substrate site is built by T264, K290, T301, E388, N515, and T520. Residue T301 is the Nucleophile of the active site.

This sequence belongs to the ArgJ family. Heterodimer of an alpha and a beta chain.

It is found in the plastid. The protein resides in the chloroplast. It catalyses the reaction N(2)-acetyl-L-ornithine + L-glutamate = N-acetyl-L-glutamate + L-ornithine. It carries out the reaction L-glutamate + acetyl-CoA = N-acetyl-L-glutamate + CoA + H(+). The protein operates within amino-acid biosynthesis; L-arginine biosynthesis; L-ornithine and N-acetyl-L-glutamate from L-glutamate and N(2)-acetyl-L-ornithine (cyclic): step 1/1. Its pathway is amino-acid biosynthesis; L-arginine biosynthesis; N(2)-acetyl-L-ornithine from L-glutamate: step 1/4. Functionally, catalyzes two activities which are involved in the cyclic version of arginine biosynthesis: the synthesis of acetylglutamate from glutamate and acetyl-CoA, and of ornithine by transacetylation between acetylornithine and glutamate. This Physcomitrium patens (Spreading-leaved earth moss) protein is Arginine biosynthesis bifunctional protein ArgJ, chloroplastic.